Reading from the N-terminus, the 544-residue chain is Chaperonin GroEL (544 aa).

Residues 29 to 32 (TLGP), 86 to 90 (DGTTT), Gly413, 476 to 478 (NAL), and Asp492 each bind ATP.

This sequence belongs to the chaperonin (HSP60) family. Forms a cylinder of 14 subunits composed of two heptameric rings stacked back-to-back. Interacts with the co-chaperonin GroES.

It localises to the cytoplasm. It catalyses the reaction ATP + H2O + a folded polypeptide = ADP + phosphate + an unfolded polypeptide.. Together with its co-chaperonin GroES, plays an essential role in assisting protein folding. The GroEL-GroES system forms a nano-cage that allows encapsulation of the non-native substrate proteins and provides a physical environment optimized to promote and accelerate protein folding. In Desulfitobacterium hafniense (strain DSM 10664 / DCB-2), this protein is Chaperonin GroEL.